Consider the following 391-residue polypeptide: Dual-specificity RNA methyltransferase RlmN (391 aa).

E112 functions as the Proton acceptor in the catalytic mechanism. The 251-residue stretch at 118 to 368 (ESDRGTLCIS…VRTPRGRDIL (251 aa)) folds into the Radical SAM core domain. An intrachain disulfide couples C125 to C371. [4Fe-4S] cluster-binding residues include C132, C136, and C139. S-adenosyl-L-methionine-binding positions include 197-198 (GE), S229, 251-253 (SLH), and N328. Residue C371 is the S-methylcysteine intermediate of the active site.

Belongs to the radical SAM superfamily. RlmN family. [4Fe-4S] cluster serves as cofactor.

The protein resides in the cytoplasm. The enzyme catalyses adenosine(2503) in 23S rRNA + 2 reduced [2Fe-2S]-[ferredoxin] + 2 S-adenosyl-L-methionine = 2-methyladenosine(2503) in 23S rRNA + 5'-deoxyadenosine + L-methionine + 2 oxidized [2Fe-2S]-[ferredoxin] + S-adenosyl-L-homocysteine. It catalyses the reaction adenosine(37) in tRNA + 2 reduced [2Fe-2S]-[ferredoxin] + 2 S-adenosyl-L-methionine = 2-methyladenosine(37) in tRNA + 5'-deoxyadenosine + L-methionine + 2 oxidized [2Fe-2S]-[ferredoxin] + S-adenosyl-L-homocysteine. Functionally, specifically methylates position 2 of adenine 2503 in 23S rRNA and position 2 of adenine 37 in tRNAs. m2A2503 modification seems to play a crucial role in the proofreading step occurring at the peptidyl transferase center and thus would serve to optimize ribosomal fidelity. The chain is Dual-specificity RNA methyltransferase RlmN from Beijerinckia indica subsp. indica (strain ATCC 9039 / DSM 1715 / NCIMB 8712).